The sequence spans 699 residues: Ribosomal RNA large subunit methyltransferase K/L (699 aa).

Positions 44-155 (DAYKLCLWSR…RDNVILGIDL (112 aa)) constitute a THUMP domain.

The protein belongs to the methyltransferase superfamily. RlmKL family.

It is found in the cytoplasm. The enzyme catalyses guanosine(2445) in 23S rRNA + S-adenosyl-L-methionine = N(2)-methylguanosine(2445) in 23S rRNA + S-adenosyl-L-homocysteine + H(+). The catalysed reaction is guanosine(2069) in 23S rRNA + S-adenosyl-L-methionine = N(2)-methylguanosine(2069) in 23S rRNA + S-adenosyl-L-homocysteine + H(+). In terms of biological role, specifically methylates the guanine in position 2445 (m2G2445) and the guanine in position 2069 (m7G2069) of 23S rRNA. In Alteromonas mediterranea (strain DSM 17117 / CIP 110805 / LMG 28347 / Deep ecotype), this protein is Ribosomal RNA large subunit methyltransferase K/L.